Reading from the N-terminus, the 163-residue chain is Peptide deformylase (163 aa).

Fe cation is bound by residues C91 and H133. E134 is a catalytic residue. Fe cation is bound at residue H137.

The protein belongs to the polypeptide deformylase family. Fe(2+) is required as a cofactor.

The enzyme catalyses N-terminal N-formyl-L-methionyl-[peptide] + H2O = N-terminal L-methionyl-[peptide] + formate. Its function is as follows. Removes the formyl group from the N-terminal Met of newly synthesized proteins. Requires at least a dipeptide for an efficient rate of reaction. N-terminal L-methionine is a prerequisite for activity but the enzyme has broad specificity at other positions. The chain is Peptide deformylase from Lachnoclostridium phytofermentans (strain ATCC 700394 / DSM 18823 / ISDg) (Clostridium phytofermentans).